Here is a 173-residue protein sequence, read N- to C-terminus: Mesencephalic astrocyte-derived neurotrophic factor homolog (173 aa).

A signal peptide spans 1–22; the sequence is MKTWHMVVVIGFLATLAQTSLA. Cystine bridges form between cysteine 28-cysteine 114, cysteine 31-cysteine 103, cysteine 61-cysteine 72, and cysteine 148-cysteine 151.

This sequence belongs to the ARMET family.

It localises to the secreted. Its function is as follows. Required during the maturation of the embryonic nervous system for maintenance of neuronal and cuticular connectivity. Essential for maintenance of dopaminergic neurons and dopamine levels. This chain is Mesencephalic astrocyte-derived neurotrophic factor homolog, found in Drosophila simulans (Fruit fly).